A 148-amino-acid chain; its full sequence is Single-stranded DNA-binding protein 2 (148 aa).

The region spanning 6-108 is the SSB domain; that stretch reads MNHITVSGLV…IEAESFGHDL (103 aa).

As to quaternary structure, homotetramer.

The polypeptide is Single-stranded DNA-binding protein 2 (ssb2) (Tropheryma whipplei (strain TW08/27) (Whipple's bacillus)).